The chain runs to 313 residues: Protoheme IX farnesyltransferase (313 aa).

Transmembrane regions (helical) follow at residues 23 to 43 (ILAY…VTTI), 56 to 76 (PLLI…ANTL), 107 to 127 (LIFG…TANL), 128 to 148 (LSGL…TLVL), 155 to 175 (NVVW…SAVT), 182 to 202 (ALVM…ALAM), 243 to 263 (LALA…VWFL), and 291 to 311 (YLAV…PTLF).

This sequence belongs to the UbiA prenyltransferase family. Protoheme IX farnesyltransferase subfamily.

The protein localises to the cell membrane. The enzyme catalyses heme b + (2E,6E)-farnesyl diphosphate + H2O = Fe(II)-heme o + diphosphate. It functions in the pathway porphyrin-containing compound metabolism; heme O biosynthesis; heme O from protoheme: step 1/1. Functionally, converts heme B (protoheme IX) to heme O by substitution of the vinyl group on carbon 2 of heme B porphyrin ring with a hydroxyethyl farnesyl side group. The polypeptide is Protoheme IX farnesyltransferase (Mycobacteroides abscessus (strain ATCC 19977 / DSM 44196 / CCUG 20993 / CIP 104536 / JCM 13569 / NCTC 13031 / TMC 1543 / L948) (Mycobacterium abscessus)).